A 950-amino-acid chain; its full sequence is Nonsense-mediated mRNA decay factor SMG8 (950 aa).

2 disordered regions span residues 560 to 607 and 624 to 651; these read HTGK…LSPT and NESQ…ADTE. Over residues 568-582 the composition is skewed to acidic residues; the sequence is QDEDGEEDAEDEEGQ. A compositionally biased stretch (polar residues) spans 593 to 607; sequence QNTASNGCSQPLSPT. Residues 624–648 show a composition bias toward low complexity; that stretch reads NESQASSEQLSNSEQNSTSSGTSSA.

The protein belongs to the SMG8 family.

Functionally, involved in nonsense-mediated decay (NMD) of mRNAs containing premature stop codons. Probable component of kinase complex containing nonC and recruited to stalled ribosomes. In Drosophila yakuba (Fruit fly), this protein is Nonsense-mediated mRNA decay factor SMG8.